The primary structure comprises 455 residues: Glutamyl-tRNA reductase (455 aa).

Substrate is bound by residues 49-52 (TCNR), Ser109, 114-116 (ETQ), and Gln120. Residue Cys50 is the Nucleophile of the active site. Residue 189–194 (GAGKMG) participates in NADP(+) binding.

Belongs to the glutamyl-tRNA reductase family. Homodimer.

The enzyme catalyses (S)-4-amino-5-oxopentanoate + tRNA(Glu) + NADP(+) = L-glutamyl-tRNA(Glu) + NADPH + H(+). The protein operates within porphyrin-containing compound metabolism; protoporphyrin-IX biosynthesis; 5-aminolevulinate from L-glutamyl-tRNA(Glu): step 1/2. Catalyzes the NADPH-dependent reduction of glutamyl-tRNA(Glu) to glutamate 1-semialdehyde (GSA). The protein is Glutamyl-tRNA reductase of Bacillus velezensis (strain DSM 23117 / BGSC 10A6 / LMG 26770 / FZB42) (Bacillus amyloliquefaciens subsp. plantarum).